We begin with the raw amino-acid sequence, 240 residues long: 1-(5-phosphoribosyl)-5-[(5-phosphoribosylamino)methylideneamino] imidazole-4-carboxamide isomerase (240 aa).

The Proton acceptor role is filled by Asp-8. Asp-129 acts as the Proton donor in catalysis.

The protein belongs to the HisA/HisF family.

It is found in the cytoplasm. The catalysed reaction is 1-(5-phospho-beta-D-ribosyl)-5-[(5-phospho-beta-D-ribosylamino)methylideneamino]imidazole-4-carboxamide = 5-[(5-phospho-1-deoxy-D-ribulos-1-ylimino)methylamino]-1-(5-phospho-beta-D-ribosyl)imidazole-4-carboxamide. It functions in the pathway amino-acid biosynthesis; L-histidine biosynthesis; L-histidine from 5-phospho-alpha-D-ribose 1-diphosphate: step 4/9. The protein is 1-(5-phosphoribosyl)-5-[(5-phosphoribosylamino)methylideneamino] imidazole-4-carboxamide isomerase of Dinoroseobacter shibae (strain DSM 16493 / NCIMB 14021 / DFL 12).